The primary structure comprises 367 residues: Cystinosin (367 aa).

An N-terminal signal peptide occupies residues 1–22; the sequence is MRRNWLLILTLFLLMFIEKYES. Over 23–125 the chain is Lumenal; that stretch reads TVSLTAPPTV…LVIHSRIVSI (103 aa). Asn36, Asn51, Asn66, Asn84, Asn104, and Asn107 each carry an N-linked (GlcNAc...) asparagine glycan. One can recognise a PQ-loop 1 domain in the interval 123–189; it reads VSIINQVIGW…LLWVPYIQEE (67 aa). Residues 126–150 form a helical membrane-spanning segment; that stretch reads INQVIGWIYFMAWSVSFYPQVIQNW. The Cytoplasmic portion of the chain corresponds to 151 to 159; that stretch reads RRKSVIGLS. The helical transmembrane segment at 160–179 threads the bilayer; that stretch reads FDFLALNLTGFVAYSVFNIG. Asn166 provides a ligand contact to L-cystine. The Lumenal portion of the chain corresponds to 180 to 202; the sequence is LLWVPYIQEEFLLKYPNGVNPVD. The chain crosses the membrane as a helical span at residues 203–225; it reads SNDAFFSLHAVALTLIVILQCCL. Asp205 is a binding site for H(+). Residues 226 to 234 lie on the Cytoplasmic side of the membrane; sequence YERGNQRVS. The chain crosses the membrane as a helical span at residues 235 to 257; it reads WPSIGFLVLAWLFVLVTMIVAAV. The Lumenal portion of the chain corresponds to 258 to 263; that stretch reads GITTWL. One can recognise a PQ-loop 2 domain in the interval 263-328; sequence LQFLFCFSYI…QSYNNDQWTL (66 aa). The chain crosses the membrane as a helical span at residues 264–289; that stretch reads QFLFCFSYIKLIITLIKYFPQAYMNF. 3 residues coordinate L-cystine: Lys273, Lys280, and Tyr281. Over 290 to 298 the chain is Cytoplasmic; that stretch reads YYKSTKGWS. The helical transmembrane segment at 299–308 threads the bilayer; that stretch reads IGGVLLDFTG. Asp305 lines the L-cystine pocket. Residue Asp305 participates in H(+) binding. The Lumenal portion of the chain corresponds to 309–331; sequence GSFSLLQMFLQSYNNDQWTLIFG. Residues 332–354 traverse the membrane as a helical segment; sequence DPTKFGLGVFTIFFDVVFFIQHF. A H(+)-binding site is contributed by Asp346. Residues 355-367 lie on the Cytoplasmic side of the membrane; that stretch reads YLYRKKPGYDQLN. A Lysosomal targeting motif motif is present at residues 362–366; sequence GYDQL.

It belongs to the cystinosin family. In terms of assembly, interacts with components of the V-ATPase complex. Interacts with components of the Ragulator complex. Interacts with RRAGA/RagA and RRAGC/RagC. Interacts with AP-3 complex subunit mu (AP3M1 or AP3M2).

The protein resides in the lysosome membrane. It is found in the melanosome membrane. The catalysed reaction is L-cystine(out) + H(+)(out) = L-cystine(in) + H(+)(in). Its activity is regulated as follows. Switches between a lumen- and a cytosol-open conformation: pH induces conformational changes and shifts the equilibrium to facilitate the transition between the lumen- and cytosol-open conformation, thereby promoting cystine transport. Protonation of specific aspartate residues (Asp-205, Asp-305 and Asp-346) favors the cytosol-open conformation. Functionally, cystine/H(+) symporter that mediates export of cystine, the oxidized dimer of cysteine, from lysosomes. Plays an important role in melanin synthesis by catalyzing cystine export from melanosomes, possibly by inhibiting pheomelanin synthesis. In addition to cystine export, also acts as a positive regulator of mTORC1 signaling in kidney proximal tubular cells, via interactions with components of the v-ATPase and Ragulator complexes. Also involved in small GTPase-regulated vesicle trafficking and lysosomal localization of LAMP2A, independently of cystine transporter activity. This is Cystinosin from Mus musculus (Mouse).